The chain runs to 417 residues: Actin-related protein 10 (417 aa).

Belongs to the actin family. As to quaternary structure, subunit of dynactin, a multiprotein complex part of a tripartite complex with dynein and a adapter, such as BICDL1, BICD2 or HOOK3. The dynactin complex is built around ACTR1A/ACTB filament and consists of an actin-related filament composed of a shoulder domain, a pointed end and a barbed end. Its length is defined by its flexible shoulder domain. The soulder is composed of 2 DCTN1 subunits, 4 DCTN2 and 2 DCTN3. The 4 DCNT2 (via N-terminus) bind the ACTR1A filament and act as molecular rulers to determine the length. The pointed end is important for binding dynein-dynactin cargo adapters. Consists of 4 subunits: ACTR10, DCNT4, DCTN5 and DCTN6. The barbed end is composed of a CAPZA1:CAPZB heterodimers, which binds ACTR1A/ACTB filament and dynactin and stabilizes dynactin.

The protein resides in the cytoplasm. The protein localises to the cytoskeleton. In terms of biological role, part of the dynactin complex that activates the molecular motor dynein for ultra-processive transport along microtubules. This chain is Actin-related protein 10 (ACTR10), found in Sus scrofa (Pig).